The following is a 624-amino-acid chain: Phosphoenolpyruvate carboxykinase (ATP) 1 (624 aa).

The segment at 1-22 (MASPNGGVTTYDYDDSDSAAPV) is disordered. 322–329 (GLSGTGKT) provides a ligand contact to ATP.

The protein belongs to the phosphoenolpyruvate carboxykinase (ATP) family. In terms of assembly, homohexamer. Green leaves but not in roots or etiolated shoots.

The protein localises to the cytoplasm. It catalyses the reaction oxaloacetate + ATP = phosphoenolpyruvate + ADP + CO2. It participates in carbohydrate biosynthesis; gluconeogenesis. This chain is Phosphoenolpyruvate carboxykinase (ATP) 1 (PCK1), found in Urochloa panicoides (Panic liverseed grass).